A 214-amino-acid chain; its full sequence is Cytochrome b (214 aa).

The next 4 helical transmembrane spans lie at 31-51 (FGSMLLACLMTQIITGFFLAI), 75-96 (WIMQNTHAISASLFFICIYIHI), 111-131 (WLSGTTLLIILMATAFFGYVL), and 176-196 (FFALHFIFPFIIISMSSIHIL). Residues His81 and His95 each coordinate heme b. 2 residues coordinate heme b: His180 and His194. Residue His199 participates in a ubiquinone binding.

Belongs to the cytochrome b family. As to quaternary structure, the cytochrome bc1 complex contains 3 respiratory subunits (MT-CYB, CYC1 and UQCRFS1), 2 core proteins (UQCRC1 and UQCRC2) and probably 6 low-molecular weight proteins. Heme b serves as cofactor.

Its subcellular location is the mitochondrion inner membrane. Component of the ubiquinol-cytochrome c reductase complex (complex III or cytochrome b-c1 complex) that is part of the mitochondrial respiratory chain. The b-c1 complex mediates electron transfer from ubiquinol to cytochrome c. Contributes to the generation of a proton gradient across the mitochondrial membrane that is then used for ATP synthesis. This chain is Cytochrome b (MT-CYB), found in Bothrops bilineatus (Green jararaca).